Reading from the N-terminus, the 650-residue chain is Probable E3 ubiquitin ligase complex SCF subunit scon-2 (650 aa).

An F-box domain is found at 124–170 (IDFISALPVELAQKVLCYLDTVSLTKAAQVSQRWRTLADSDAVWVRM). Residues 200–244 (QRQLAKGGPQGRVTELADSHDSQDRSVNQHGKRPAAEAEEEDPIK) form a disordered region. The segment covering 214–223 (ELADSHDSQD) has biased composition (basic and acidic residues). WD repeat units lie at residues 292–320 (GHEN…KIWN), 332–360 (GHTA…KVWN), 372–400 (AHTD…KIFD), 411–441 (GHSD…KLWD), and 453–488 (GHVG…AMSV). The tract at residues 482–525 (NQDAMSVSSGGSGSPSMSHAQIERAGSPGSHSSSHNLLPSSLPS) is disordered. Low complexity-rich tracts occupy residues 487-499 (SVSS…PSMS) and 507-525 (GSPG…SLPS). 3 WD repeats span residues 528-564 (EDVR…RLWD), 576-604 (GHLE…KTWE), and 616-644 (GHCG…RLHS).

The protein belongs to the WD repeat MET30/SCONB/SCON-2 family. Component of the SCF(scon-2) E3 ubiquitin ligase complex.

It participates in protein modification; protein ubiquitination. Its function is as follows. Component of the SCF(scon-2) E3 ubiquitin ligase complex involved in the regulation of sulfur metabolite repression, probably by mediating the inactivation or degradation of the metR transcription factor. This Neurospora crassa (strain ATCC 24698 / 74-OR23-1A / CBS 708.71 / DSM 1257 / FGSC 987) protein is Probable E3 ubiquitin ligase complex SCF subunit scon-2 (scon-2).